The chain runs to 472 residues: tRNA(Ile)-lysidine synthase (472 aa).

S25–S30 is an ATP binding site.

It belongs to the tRNA(Ile)-lysidine synthase family.

It localises to the cytoplasm. It catalyses the reaction cytidine(34) in tRNA(Ile2) + L-lysine + ATP = lysidine(34) in tRNA(Ile2) + AMP + diphosphate + H(+). Its function is as follows. Ligates lysine onto the cytidine present at position 34 of the AUA codon-specific tRNA(Ile) that contains the anticodon CAU, in an ATP-dependent manner. Cytidine is converted to lysidine, thus changing the amino acid specificity of the tRNA from methionine to isoleucine. The polypeptide is tRNA(Ile)-lysidine synthase (tilS) (Bacillus subtilis (strain 168)).